The primary structure comprises 179 residues: Cellular nucleic acid-binding protein homolog (179 aa).

CCHC-type zinc fingers lie at residues 17–34, 36–53, 58–75, 83–100, 116–133, 135–152, and 157–174; these read PRCY…ECTK, SICY…ECTE, KTCY…DCPS, AECY…DCRT, MNCY…DCTM, VKCY…ECQQ, and QLCY…NCTS.

It to human CNBP and to retroviral nucleic acid binding proteins (NBP). In terms of processing, phosphorylated.

The protein localises to the nucleus. Its function is as follows. Acts in the sexual differentiation pathway. Is required for efficient conjugation. Double-stranded DNA-binding protein. In Schizosaccharomyces pombe (strain 972 / ATCC 24843) (Fission yeast), this protein is Cellular nucleic acid-binding protein homolog (byr3).